We begin with the raw amino-acid sequence, 214 residues long: Protein-L-isoaspartate O-methyltransferase 1 (214 aa).

The active site involves serine 62.

It belongs to the methyltransferase superfamily. L-isoaspartyl/D-aspartyl protein methyltransferase family.

It localises to the cytoplasm. The catalysed reaction is [protein]-L-isoaspartate + S-adenosyl-L-methionine = [protein]-L-isoaspartate alpha-methyl ester + S-adenosyl-L-homocysteine. Catalyzes the methyl esterification of L-isoaspartyl residues in peptides and proteins that result from spontaneous decomposition of normal L-aspartyl and L-asparaginyl residues. It plays a role in the repair and/or degradation of damaged proteins. This is Protein-L-isoaspartate O-methyltransferase 1 from Syntrophobacter fumaroxidans (strain DSM 10017 / MPOB).